We begin with the raw amino-acid sequence, 89 residues long: Large ribosomal subunit protein bL27 (89 aa).

The disordered stretch occupies residues 1–22 (MAHKKAGGSSRNGRDSESKRLG).

Belongs to the bacterial ribosomal protein bL27 family.

This is Large ribosomal subunit protein bL27 from Bartonella henselae (strain ATCC 49882 / DSM 28221 / CCUG 30454 / Houston 1) (Rochalimaea henselae).